The primary structure comprises 290 residues: Short chain dehydrogenase andI (290 aa).

7 residues coordinate NADP(+): Ile35, Asn120, Arg154, Tyr186, Lys190, Val219, and Thr221. Tyr186 (proton acceptor) is an active-site residue. The Lowers pKa of active site Tyr role is filled by Lys190.

The protein belongs to the short-chain dehydrogenases/reductases (SDR) family.

It functions in the pathway secondary metabolite biosynthesis; terpenoid biosynthesis. In terms of biological role, short chain dehydrogenase; part of the gene cluster that mediates the biosynthesis of anditomin, a fungal meroterpenoid. The first step of the pathway is the synthesis of 3,5-dimethylorsellinic acid (DMOA) by the polyketide synthase andM. DMOA is then converted to the phthalide compound 5,7-dihydroxy-4,6-dimethylphthalide (DHDMP) by the cytochrome P450 monooxygenase andK, which is further prenylated by the prenyltransferase andD to yield farnesyl-DHDMP. Further epoxidation by the FAD-dependent monooxygenase andE leads to epoxyfarnesyl-DHDMP. The next step involves the terpene cyclase andB that converts epoxyfarnesyl-DHDMP into preandiloid A through opening of the epoxide ring followed by the cyclization of the farnesyl moiety. Preandiloid A is in turn oxidized at the C-3 hydroxyl group to yield preandiloid B by the dehydrogenase andC. The dioxygenase andA is solely responsible for the dehydrogenation of preandiloid B leading to the enone preandiloid C, as well as for the intriguing structural rearrangement to generate the bicyclo[2.2.2]octane core, transforming preandiloid C into andiconin. FAD-binding monooxygenase andJ then produces andilesin D which is reduced by dehydrogenase andI to yield andilesin A. Action of acetyltransferase andG followed by a spontaneous acetate elimination leads then to andilesin B, which is in turn substrate of the short chain dehydrogenase andH to yield andilesin C. Finally, the dioxygenase andF catalyzes the transformation of andilesin C to anditomin. The chain is Short chain dehydrogenase andI from Emericella variicolor (Aspergillus stellatus).